We begin with the raw amino-acid sequence, 207 residues long: Large ribosomal subunit protein uL3c (207 aa).

The tract at residues 115–151 is disordered; it reads IGKGFAGNQKRHNFSRGPMTHGSKNHRLPGSIGAGST.

This sequence belongs to the universal ribosomal protein uL3 family. As to quaternary structure, part of the 50S ribosomal subunit.

The protein localises to the plastid. The protein resides in the chloroplast. Functionally, one of the primary rRNA binding proteins, it binds directly near the 3'-end of the 23S rRNA, where it nucleates assembly of the 50S subunit. The polypeptide is Large ribosomal subunit protein uL3c (rpl3) (Emiliania huxleyi (Coccolithophore)).